Reading from the N-terminus, the 247-residue chain is Type III pantothenate kinase (247 aa).

6-13 (DVGNTSIY) provides a ligand contact to ATP. 102-105 (GADL) is a substrate binding site. Catalysis depends on aspartate 104, which acts as the Proton acceptor. Residue aspartate 122 coordinates K(+). Position 125 (threonine 125) interacts with ATP. Position 176 (threonine 176) interacts with substrate.

This sequence belongs to the type III pantothenate kinase family. Homodimer. It depends on NH4(+) as a cofactor. K(+) serves as cofactor.

It localises to the cytoplasm. The catalysed reaction is (R)-pantothenate + ATP = (R)-4'-phosphopantothenate + ADP + H(+). Its pathway is cofactor biosynthesis; coenzyme A biosynthesis; CoA from (R)-pantothenate: step 1/5. In terms of biological role, catalyzes the phosphorylation of pantothenate (Pan), the first step in CoA biosynthesis. The chain is Type III pantothenate kinase from Acholeplasma laidlawii (strain PG-8A).